A 305-amino-acid chain; its full sequence is Guanine nucleotide-binding protein subunit beta (305 aa).

WD repeat units follow at residues 19 to 49 (NKLGKIPDIDISTDGKYLLSASTNDVLLVWD), 61 to 91 (APSVWIMTCAFSPSTKSIAAGGLNNFCVVYD), 104 to 133 (GHAGFVSCCKYVDDGHLLTGSGDKTCMFWD), 145 to 176 (GHEMDIVSLDFLPSNPNLFVTGGCDKLAKLWD), 188 to 218 (GNTSDINSISFFPSNADFVTGAEDGIARCFD), 231 to 260 (PSSSPINSVLFSKSGKLLFIAKDKTCEVWD), and 272 to 302 (GHENRISSLALTSDGTMLATGSWDECVRLWS).

This sequence belongs to the WD repeat G protein beta family. As to quaternary structure, g proteins are composed of 3 units, alpha, beta and gamma. Binding of the beta-gamma subunit complex (git5-git11) to the alpha subunit (gpa2) facilitates interaction with GPCR git3.

The protein resides in the cell membrane. The protein localises to the cytoplasm. Its subcellular location is the nucleus. Beta subunit of the heterotrimeric guanine nucleotide-binding protein (G protein) involved in glucose-induced cAMP signaling. The beta-gamma subunits (git5-git11) promote binding of the alpha subunit gpa2 to GPCR git3, which senses extracellular glucose, to activate cAMP-PKA signaling and repress sexual development and gluconeogenesis. In Schizosaccharomyces pombe (strain 972 / ATCC 24843) (Fission yeast), this protein is Guanine nucleotide-binding protein subunit beta (git5).